We begin with the raw amino-acid sequence, 264 residues long: Apolipoprotein A-I (264 aa).

The N-terminal stretch at 1 to 18 is a signal peptide; the sequence is MKAVVLAVAVLFLTGSQA. Tandem repeats lie at residues 67–88 and 89–110. The 10 X approximate tandem repeats stretch occupies residues 67–264; the sequence is LKLLDNWDTL…DQATKQLTAQ (198 aa). Position 109 is a methionine sulfoxide (M109). The stretch at 111–121 is one 3; half-length repeat; it reads KDLQEVKQKVQ. 5 repeat units span residues 122–143, 144–165, 166–187, 188–207, and 208–229. The stretch at 230 to 240 is one 9; half-length repeat; the sequence is PALEDLRQGLL. Copy 10 of the repeat occupies 241–264; the sequence is PVLESLKASILSSIDQATKQLTAQ.

Belongs to the apolipoprotein A1/A4/E family. Homodimer. Interacts with APOA1BP and CLU. Component of a sperm activating protein complex (SPAP), consisting of APOA1, an immunoglobulin heavy chain, an immunoglobulin light chain and albumin. Interacts with NDRG1. Interacts with SCGB3A2. Interacts with NAXE and YJEFN3. In terms of processing, glycosylated. Palmitoylated. Post-translationally, phosphorylation sites are present in the extracellular medium.

Its subcellular location is the secreted. Its function is as follows. Participates in the reverse transport of cholesterol from tissues to the liver for excretion by promoting cholesterol efflux from tissues and by acting as a cofactor for the lecithin cholesterol acyltransferase (LCAT). As part of the SPAP complex, activates spermatozoa motility. This is Apolipoprotein A-I (APOA1) from Chinchilla lanigera (Long-tailed chinchilla).